A 3856-amino-acid chain; its full sequence is Hybrid PKS-NRPS synthetase traA (3856 aa).

A Ketosynthase family 3 (KS3) domain is found at 6–438 (PEPIAIVGSG…GTNGHAILEE (433 aa)). Active-site for beta-ketoacyl synthase activity residues include Cys-179, His-318, and His-358. The interval 554–885 (IFTGQGAQWA…FSDALGFVWT (332 aa)) is malonyl-CoA:ACP transacylase (MAT) domain. The interval 943 to 1081 (HELLGVPSPN…GKVTVIYGTP (139 aa)) is N-terminal hotdog fold. Positions 943–1247 (HELLGVPSPN…LSMKPFSPAT (305 aa)) are dehydratase (DH) domain. The region spanning 943 to 1249 (HELLGVPSPN…MKPFSPATAD (307 aa)) is the PKS/mFAS DH domain. His-975 functions as the Proton acceptor; for dehydratase activity in the catalytic mechanism. The C-terminal hotdog fold stretch occupies residues 1096 to 1249 (MVDIQAEQFY…MKPFSPATAD (154 aa)). Asp-1156 serves as the catalytic Proton donor; for dehydratase activity. Positions 1290-1456 (LACVAQQIVH…RKAGFSGIDS (167 aa)) are methyltransferase (MT) domain. The interval 1984-2158 (TYVLVGLSGR…ATSLDIGSIV (175 aa)) is ketoreductase (KR) domain. Positions 2266-2347 (ADALEILKEL…TLCQQALEKL (82 aa)) constitute a Carrier 1 domain. Residue Ser-2307 is modified to O-(pantetheine 4'-phosphoryl)serine. The segment at 2351 to 2422 (ILPNVESGGP…SSTPATVLSN (72 aa)) is disordered. Low complexity-rich tracts occupy residues 2357–2369 (SGGPSKTGSSKPT) and 2399–2418 (TTSPQSTLSSDQSPSSTPAT). The condensation (C) domain stretch occupies residues 2446–2884 (VKTELVSFQQ…FALFSDKELK (439 aa)). The segment at 2910-3310 (QIAKENDDKV…GAMVFHNRIA (401 aa)) is adenylation (A) domain. The disordered stretch occupies residues 3403–3429 (SKTDRKALKELPLPQRSNHDTGDNTES). The 80-residue stretch at 3428–3507 (ESLTETMLEL…DMTQKIEESL (80 aa)) folds into the Carrier 2 domain. Residue Ser-3467 is modified to O-(pantetheine 4'-phosphoryl)serine. The interval 3544–3768 (VTGSGGFLGK…EMTPIHSAAS (225 aa)) is reductase (R) domain.

In the C-terminal section; belongs to the NRP synthetase family.

It participates in secondary metabolite biosynthesis. Hybrid PKS-NRPS synthetase; part of the tra gene cluster that produces terrestric acid. The clavatol biosynthesis cluster cla and the terrestric acid cluster tra are both involved in the production of peniphenones and penilactones. The non-reducing PKS claF is responsible for the formation of clavatol from successive condensations of 3 malonyl-CoA units, presumably with a simple acetyl-CoA starter unit, and 2 methylation steps. The esterase claE probably collaborates with claF by catalyzing the hydrolysis of ACP-bound acyl intermediates to free the ACP from stalled intermediates. The clavatol oxidase claD then converts clavatol to hydroxyclavatol. Spontaneous dehydration of hydroxyclavatol leads to the accumulation of the highly active ortho-quinone methide. On the other hand, the PKS-NRPS hybrid traA is involved in the formation of crustosic acid, with the help of traB and traD. The polyketide synthase module (PKS) of traA is responsible for the synthesis of the polyketide backbone via the condensation of an acetyl-CoA starter unit with 3 malonyl-CoA units. The downstream nonribosomal peptide synthetase (NRPS) module then amidates the carboxyl end of the polyketide with L-malic acid. Because traA lacks a designated enoylreductase (ER) domain, the required activity is provided the enoyl reductase traG. Crustosic acid undergoes decarboxylation and isomerization to the terrestric acid, catalyzed by the 2-oxoglutarate-dependent dioxygenase traH. Both acids are further converted to the 2 gamma-butyrolactones (R)-5-methyltetronic acid and (S)-5-carboxylmethyltetronic acid, with involvement of the cytochrome P450 monooxygenase claJ. Spontaneous addition of the methide to these gamma-butyrolactones leads to peniphenone D and penilactone D, which undergo again stereospecific attacking by methide to give penilactones A and B. This chain is Hybrid PKS-NRPS synthetase traA, found in Penicillium crustosum (Blue mold fungus).